The primary structure comprises 98 residues: Large ribosomal subunit protein uL23 (98 aa).

The protein belongs to the universal ribosomal protein uL23 family. In terms of assembly, part of the 50S ribosomal subunit. Contacts protein L29, and trigger factor when it is bound to the ribosome.

Its function is as follows. One of the early assembly proteins it binds 23S rRNA. One of the proteins that surrounds the polypeptide exit tunnel on the outside of the ribosome. Forms the main docking site for trigger factor binding to the ribosome. This chain is Large ribosomal subunit protein uL23, found in Herpetosiphon aurantiacus (strain ATCC 23779 / DSM 785 / 114-95).